The primary structure comprises 445 residues: GRAM domain-containing protein 2B (445 aa).

Residue methionine 1 is modified to N-acetylmethionine. The segment at 1–118 is disordered; the sequence is MVKKRLSSSD…ERKKSSSSSQ (118 aa). Composition is skewed to polar residues over residues 18 to 44 and 56 to 68; these read PSNS…SSEA and KSPT…SSVE. Over residues 82–93 the composition is skewed to low complexity; that stretch reads SKSSFDGSSLLS. Over residues 94 to 112 the composition is skewed to basic and acidic residues; it reads DKNDCKTESKTDSKTERKK. The 68-residue stretch at 123–190 folds into the GRAM domain; it reads MHFHKLFLDV…FSVTLIKKTK (68 aa). Positions 233–246 are enriched in polar residues; the sequence is TSVGNSPNPSSAEN. A disordered region spans residues 233–252; it reads TSVGNSPNPSSAENSFRADR. Phosphoserine occurs at positions 238, 255, and 265. The disordered stretch occupies residues 277-331; the sequence is DLEGYSSSGSQTPESENSRDFHVTESQTVLNVTKGETKPPRTDAHGSRAPDGKAK. A compositionally biased stretch (polar residues) spans 281–291; sequence YSSSGSQTPES. Over residues 311-330 the composition is skewed to basic and acidic residues; that stretch reads GETKPPRTDAHGSRAPDGKA.

This chain is GRAM domain-containing protein 2B (Gramd2b), found in Mus musculus (Mouse).